The chain runs to 383 residues: Homoserine O-acetyltransferase (383 aa).

The AB hydrolase-1 domain maps to 52-362 (NAILVCHALT…PWGHDAFLLD (311 aa)). Residue S158 is the Nucleophile of the active site. Position 227 (R227) interacts with substrate. Active-site residues include D323 and H356. D357 is a substrate binding site.

It belongs to the AB hydrolase superfamily. MetX family. Homodimer.

It is found in the cytoplasm. It carries out the reaction L-homoserine + acetyl-CoA = O-acetyl-L-homoserine + CoA. Its pathway is amino-acid biosynthesis; L-methionine biosynthesis via de novo pathway; O-acetyl-L-homoserine from L-homoserine: step 1/1. Transfers an acetyl group from acetyl-CoA to L-homoserine, forming acetyl-L-homoserine. In Symbiobacterium thermophilum (strain DSM 24528 / JCM 14929 / IAM 14863 / T), this protein is Homoserine O-acetyltransferase.